The sequence spans 195 residues: MARLILFGPPGAGKGTQAKHLVDLLDIPHISTGDIFRAAVRNQTPLGQQVQAYLDSGRLVPDELTINLIQERLHQSDVQKGWILDGFPRTLAQAEALEKLLHQINQPYDRVLSLTVPEEVLTQRLVLRAEKESRKDDTPEVIQKRLGVYWKDTAPLLDFYRNQQRLATIDGNQPESDVTAQIQHIVDQLKGEKIV.

An ATP-binding site is contributed by 11-16 (GAGKGT). The segment at 31-60 (STGDIFRAAVRNQTPLGQQVQAYLDSGRLV) is NMP. Residues T32, R37, 58 to 60 (RLV), 86 to 89 (GFPR), and Q93 contribute to the AMP site. The interval 127–137 (LRAEKESRKDD) is LID. R128 lines the ATP pocket. 2 residues coordinate AMP: R134 and R145. Q173 contributes to the ATP binding site.

It belongs to the adenylate kinase family. In terms of assembly, monomer.

The protein resides in the cytoplasm. The enzyme catalyses AMP + ATP = 2 ADP. Its pathway is purine metabolism; AMP biosynthesis via salvage pathway; AMP from ADP: step 1/1. Catalyzes the reversible transfer of the terminal phosphate group between ATP and AMP. Plays an important role in cellular energy homeostasis and in adenine nucleotide metabolism. This Cyanothece sp. (strain PCC 7425 / ATCC 29141) protein is Adenylate kinase.